The chain runs to 296 residues: Large ribosomal subunit protein uL15m (296 aa).

The N-terminal 20 residues, 1 to 20 (MAASGGSGGKATELLRCLPR), are a transit peptide targeting the mitochondrion. Residues 25–66 (NLRPNPGARHREKRRGRGIHGGRKSGRGHKGETQRGNQPRLG) form a disordered region. Over residues 32 to 52 (ARHREKRRGRGIHGGRKSGRG) the composition is skewed to basic residues.

Belongs to the universal ribosomal protein uL15 family. As to quaternary structure, component of the mitochondrial ribosome large subunit (39S) which comprises a 16S rRNA and about 50 distinct proteins.

The protein localises to the mitochondrion. In Xenopus laevis (African clawed frog), this protein is Large ribosomal subunit protein uL15m (mrpl15).